A 704-amino-acid polypeptide reads, in one-letter code: Ion-translocating oxidoreductase complex subunit C (704 aa).

4Fe-4S ferredoxin-type domains lie at 368–397 and 407–436; these read MGAPQEEKSCIRCSACADACPADLLPQQLY and KATAHHIADCIECGACAWVCPSNIPLVQYF. [4Fe-4S] cluster contacts are provided by Cys377, Cys380, Cys383, Cys387, Cys416, Cys419, Cys422, and Cys426. A disordered region spans residues 536 to 685; sequence RAKQAAHPMA…ADPRKAAVAA (150 aa). Positions 556–565 are enriched in low complexity; the sequence is KAAVEAAIAR.

The protein belongs to the 4Fe4S bacterial-type ferredoxin family. RnfC subfamily. In terms of assembly, the complex is composed of six subunits: RsxA, RsxB, RsxC, RsxD, RsxE and RsxG. [4Fe-4S] cluster is required as a cofactor.

The protein localises to the cell inner membrane. Functionally, part of a membrane-bound complex that couples electron transfer with translocation of ions across the membrane. Required to maintain the reduced state of SoxR. This chain is Ion-translocating oxidoreductase complex subunit C, found in Salmonella dublin (strain CT_02021853).